A 440-amino-acid chain; its full sequence is Transposon Ty1-PR3 Gag polyprotein (440 aa).

Composition is skewed to polar residues over residues 1–23 (MESQ…SVTS), 48–60 (TKAN…TPAS), and 127–152 (QSQF…GNTF). Disordered stretches follow at residues 1–93 (MESQ…MMTQ), 126–173 (PQSQ…RPPP), and 352–440 (GSRN…PGTY). Over residues 153 to 165 (TDSSSADSDMTST) the composition is skewed to low complexity. Residues 299 to 401 (NNGIHINNKV…NSKSKTARAH (103 aa)) are RNA-binding. Over residues 402–418 (NVSTSNNSPSTDNDSIS) the composition is skewed to low complexity. S416 carries the phosphoserine modification. Polar residues predominate over residues 419–428 (KSTTEPIQLN). Basic and acidic residues predominate over residues 429–440 (NKHDLHLRPGTY).

In terms of assembly, homotrimer.

The protein resides in the cytoplasm. Functionally, capsid protein (CA) is the structural component of the virus-like particle (VLP), forming the shell that encapsulates the retrotransposons dimeric RNA genome. The particles are assembled from trimer-clustered units and there are holes in the capsid shells that allow for the diffusion of macromolecules. CA also has nucleocapsid-like chaperone activity, promoting primer tRNA(i)-Met annealing to the multipartite primer-binding site (PBS), dimerization of Ty1 RNA and initiation of reverse transcription. The protein is Transposon Ty1-PR3 Gag polyprotein (TY1A-PR3) of Saccharomyces cerevisiae (strain ATCC 204508 / S288c) (Baker's yeast).